We begin with the raw amino-acid sequence, 275 residues long: NH(3)-dependent NAD(+) synthetase (275 aa).

Residue 50–57 (GISGGVDS) participates in ATP binding. Aspartate 56 serves as a coordination point for Mg(2+). Residue arginine 147 participates in deamido-NAD(+) binding. Threonine 167 lines the ATP pocket. Residue glutamate 172 participates in Mg(2+) binding. Residues lysine 180 and aspartate 187 each contribute to the deamido-NAD(+) site. ATP is bound by residues lysine 196 and threonine 218. Residue 267 to 268 (HK) participates in deamido-NAD(+) binding.

This sequence belongs to the NAD synthetase family. Homodimer.

The enzyme catalyses deamido-NAD(+) + NH4(+) + ATP = AMP + diphosphate + NAD(+) + H(+). The protein operates within cofactor biosynthesis; NAD(+) biosynthesis; NAD(+) from deamido-NAD(+) (ammonia route): step 1/1. In terms of biological role, catalyzes the ATP-dependent amidation of deamido-NAD to form NAD. Uses ammonia as a nitrogen source. In Pseudomonas putida (strain GB-1), this protein is NH(3)-dependent NAD(+) synthetase.